Consider the following 166-residue polypeptide: MAKTLSKPASGALAPWLGISLIVILFDQLSKIAILKTFAYGAQHALTSFFSLVLVYNRGAAFGFLSTASGWQRWAFTALGIGATLVICFLLRRHGQQRLFSLSLALILGGALGNVIDRLVYGHVIDFLDFHVGGWHFPAFNLADSAITVGAVLLVYDELRRVRGSR.

Helical transmembrane passes span Ala-9–Leu-29, Ala-45–Leu-65, Trp-71–Leu-91, and Phe-100–Val-120. Residues Asp-126 and Asp-144 contribute to the active site. Residues Trp-135 to Val-155 traverse the membrane as a helical segment.

Belongs to the peptidase A8 family.

It localises to the cell inner membrane. It carries out the reaction Release of signal peptides from bacterial membrane prolipoproteins. Hydrolyzes -Xaa-Yaa-Zaa-|-(S,diacylglyceryl)Cys-, in which Xaa is hydrophobic (preferably Leu), and Yaa (Ala or Ser) and Zaa (Gly or Ala) have small, neutral side chains.. Its pathway is protein modification; lipoprotein biosynthesis (signal peptide cleavage). Functionally, this protein specifically catalyzes the removal of signal peptides from prolipoproteins. This Burkholderia ambifaria (strain MC40-6) protein is Lipoprotein signal peptidase.